The sequence spans 1186 residues: Pesticidal crystal protein Cry14Aa (1186 aa).

This sequence belongs to the delta endotoxin family.

Its function is as follows. Promotes colloidosmotic lysis by binding to the midgut epithelial cells of insects. This Bacillus thuringiensis subsp. sotto protein is Pesticidal crystal protein Cry14Aa (cry14Aa).